Here is a 476-residue protein sequence, read N- to C-terminus: Bifunctional protein HldE (476 aa).

A ribokinase region spans residues 1–318; that stretch reads MAQYSAEFKQ…ENAIHARPET (318 aa). 195–198 provides a ligand contact to ATP; the sequence is NMSE. The active site involves Asp-264. Positions 344 to 476 are cytidylyltransferase; sequence MTNGCFDILH…VIEKIKLLKD (133 aa).

The protein in the N-terminal section; belongs to the carbohydrate kinase PfkB family. This sequence in the C-terminal section; belongs to the cytidylyltransferase family. As to quaternary structure, homodimer.

It carries out the reaction D-glycero-beta-D-manno-heptose 7-phosphate + ATP = D-glycero-beta-D-manno-heptose 1,7-bisphosphate + ADP + H(+). The catalysed reaction is D-glycero-beta-D-manno-heptose 1-phosphate + ATP + H(+) = ADP-D-glycero-beta-D-manno-heptose + diphosphate. It participates in nucleotide-sugar biosynthesis; ADP-L-glycero-beta-D-manno-heptose biosynthesis; ADP-L-glycero-beta-D-manno-heptose from D-glycero-beta-D-manno-heptose 7-phosphate: step 1/4. It functions in the pathway nucleotide-sugar biosynthesis; ADP-L-glycero-beta-D-manno-heptose biosynthesis; ADP-L-glycero-beta-D-manno-heptose from D-glycero-beta-D-manno-heptose 7-phosphate: step 3/4. In terms of biological role, catalyzes the phosphorylation of D-glycero-D-manno-heptose 7-phosphate at the C-1 position to selectively form D-glycero-beta-D-manno-heptose-1,7-bisphosphate. Catalyzes the ADP transfer from ATP to D-glycero-beta-D-manno-heptose 1-phosphate, yielding ADP-D-glycero-beta-D-manno-heptose. This chain is Bifunctional protein HldE, found in Haemophilus influenzae (strain PittGG).